We begin with the raw amino-acid sequence, 873 residues long: DNA mismatch repair protein MutS (873 aa).

ATP is bound at residue 628–635; sequence GPNMAGKS.

Belongs to the DNA mismatch repair MutS family.

Its function is as follows. This protein is involved in the repair of mismatches in DNA. It is possible that it carries out the mismatch recognition step. This protein has a weak ATPase activity. This Chlorobium chlorochromatii (strain CaD3) protein is DNA mismatch repair protein MutS.